Here is a 109-residue protein sequence, read N- to C-terminus: Large ribosomal subunit protein uL22 (109 aa).

It belongs to the universal ribosomal protein uL22 family. As to quaternary structure, part of the 50S ribosomal subunit.

Functionally, this protein binds specifically to 23S rRNA; its binding is stimulated by other ribosomal proteins, e.g. L4, L17, and L20. It is important during the early stages of 50S assembly. It makes multiple contacts with different domains of the 23S rRNA in the assembled 50S subunit and ribosome. In terms of biological role, the globular domain of the protein is located near the polypeptide exit tunnel on the outside of the subunit, while an extended beta-hairpin is found that lines the wall of the exit tunnel in the center of the 70S ribosome. The sequence is that of Large ribosomal subunit protein uL22 from Leptothrix cholodnii (strain ATCC 51168 / LMG 8142 / SP-6) (Leptothrix discophora (strain SP-6)).